An 86-amino-acid chain; its full sequence is Small ribosomal subunit protein bS20 (86 aa).

This sequence belongs to the bacterial ribosomal protein bS20 family.

Functionally, binds directly to 16S ribosomal RNA. The polypeptide is Small ribosomal subunit protein bS20 (Kineococcus radiotolerans (strain ATCC BAA-149 / DSM 14245 / SRS30216)).